The following is an 89-amino-acid chain: Small ribosomal subunit protein bS16 (89 aa).

The protein belongs to the bacterial ribosomal protein bS16 family.

The chain is Small ribosomal subunit protein bS16 from Chloroflexus aurantiacus (strain ATCC 29364 / DSM 637 / Y-400-fl).